A 211-amino-acid polypeptide reads, in one-letter code: Cytochrome c biogenesis ATP-binding export protein CcmA (211 aa).

In terms of domain architecture, ABC transporter spans 6 to 211 (LQTVALACER…RDIDLGNWAV (206 aa)). 38 to 45 (GPNGSGKT) lines the ATP pocket.

The protein belongs to the ABC transporter superfamily. CcmA exporter (TC 3.A.1.107) family. In terms of assembly, the complex is composed of two ATP-binding proteins (CcmA) and two transmembrane proteins (CcmB).

Its subcellular location is the cell inner membrane. The enzyme catalyses heme b(in) + ATP + H2O = heme b(out) + ADP + phosphate + H(+). Part of the ABC transporter complex CcmAB involved in the biogenesis of c-type cytochromes; once thought to export heme, this seems not to be the case, but its exact role is uncertain. Responsible for energy coupling to the transport system. The protein is Cytochrome c biogenesis ATP-binding export protein CcmA of Pseudomonas fluorescens (strain Pf0-1).